Consider the following 809-residue polypeptide: Plasminogen (809 aa).

Residues 1 to 19 form the signal peptide; that stretch reads MDHKEVVLLLLLFLKSGLG. A PAN domain is found at 20–98; that stretch reads DSLDDYVNTQ…RDVVLFEKRI (79 aa). 24 disulfides stabilise this stretch: Cys-49-Cys-73, Cys-53-Cys-61, Cys-103-Cys-181, Cys-124-Cys-164, Cys-152-Cys-176, Cys-185-Cys-262, Cys-188-Cys-316, Cys-206-Cys-245, Cys-234-Cys-257, Cys-275-Cys-352, Cys-296-Cys-335, Cys-324-Cys-347, Cys-377-Cys-454, Cys-398-Cys-437, Cys-426-Cys-449, Cys-480-Cys-559, Cys-501-Cys-542, Cys-530-Cys-554, Cys-566-Cys-684, Cys-576-Cys-584, Cys-606-Cys-622, Cys-698-Cys-765, Cys-728-Cys-744, and Cys-755-Cys-783. Kringle domains are found at residues 103 to 181 and 185 to 262; these read CKTG…IPEC and CMHC…IPRC. An O-linked (GalNAc...) threonine glycan is attached at Thr-268. Kringle domains lie at 275-352, 377-454, and 480-559; these read CLKG…IPSC, CYRG…LKKC, and CMFG…VPQC. Residue Asn-308 is glycosylated (N-linked (GlcNAc...) asparagine). Positions 580-807 constitute a Peptidase S1 domain; that stretch reads VVGGCVSIPH…FVTWIEEIMR (228 aa). Position 596 is a phosphoserine (Ser-596). Active-site charge relay system residues include His-621 and Asp-664. Ser-759 acts as the Charge relay system in catalysis.

It belongs to the peptidase S1 family. Plasminogen subfamily. Interacts with CSPG4 and AMOT. Interacts (via the Kringle domains) with HRG; the interaction tethers PLG to the cell surface and enhances its activation. Interacts (via Kringle 4 domain) with ADA; the interaction stimulates PLG activation when in complex with DPP4. Angiostatin: Interacts with ATP5F1A; the interaction inhibits most of the angiogenic effects of angiostatin. In terms of processing, N-linked glycan contains N-acetyllactosamine, sialic acid and is core fucosylated. O-linked glycans consist of Gal-GalNAc disaccharide which is modified with up to 2 sialic acid residues (microheterogeneity). In the presence of the inhibitor, the activation involves only cleavage after Arg-579, yielding two chains held together by two disulfide bonds. In the absence of the inhibitor, the activation involves additionally the removal of the activation peptide.

Its subcellular location is the secreted. The catalysed reaction is Preferential cleavage: Lys-|-Xaa &gt; Arg-|-Xaa, higher selectivity than trypsin. Converts fibrin into soluble products.. Converted into plasmin by plasminogen activators, both plasminogen and its activator being bound to fibrin. Cannot be activated with streptokinase. In terms of biological role, plasmin dissolves the fibrin of blood clots and acts as a proteolytic factor in a variety of other processes including embryonic development, tissue remodeling, tumor invasion, and inflammation. In ovulation, weakens the walls of the Graafian follicle. It activates the urokinase-type plasminogen activator, collagenases and several complement zymogens, such as C1, C4 and C5. Cleavage of fibronectin and laminin leads to cell detachment and apoptosis. Also cleaves fibrin, thrombospondin and von Willebrand factor. Its role in tissue remodeling and tumor invasion may be modulated by CSPG4. Binds to cells. This chain is Plasminogen (PLG), found in Sus scrofa (Pig).